A 338-amino-acid polypeptide reads, in one-letter code: Terpene synthase 1 (338 aa).

Positions 80 to 85 match the DDxx(x)D/E motif motif; sequence DDALDS. The short motif at 220–228 is the NDxxSxxxD/E motif element; that stretch reads NDLVSYEKE.

The protein belongs to the terpene synthase family.

The enzyme catalyses (2E,6E)-farnesyl diphosphate = (2S,3R,6S,9S)-(-)-protoillud-7-ene + diphosphate. Terpene synthase that converts its substrate farnesyl diphosphate (FPP) into the sesquiterpene protoillud-7-ene. The chain is Terpene synthase 1 from Cavenderia fasciculata (Slime mold).